The primary structure comprises 250 residues: 2,3-bisphosphoglycerate-dependent phosphoglycerate mutase (250 aa).

Substrate contacts are provided by residues 10–17, 23–24, Arg62, 89–92, Lys100, 116–117, and 185–186; these read RHGESQWN, TG, ERHY, RR, and GN. Catalysis depends on His11, which acts as the Tele-phosphohistidine intermediate. Glu89 (proton donor/acceptor) is an active-site residue.

Belongs to the phosphoglycerate mutase family. BPG-dependent PGAM subfamily. Homodimer.

It catalyses the reaction (2R)-2-phosphoglycerate = (2R)-3-phosphoglycerate. It participates in carbohydrate degradation; glycolysis; pyruvate from D-glyceraldehyde 3-phosphate: step 3/5. Its function is as follows. Catalyzes the interconversion of 2-phosphoglycerate and 3-phosphoglycerate. This chain is 2,3-bisphosphoglycerate-dependent phosphoglycerate mutase, found in Salmonella agona (strain SL483).